The following is a 172-amino-acid chain: C-phycocyanin beta chain (172 aa).

N4-methylasparagine is present on Asn72. Residues Cys82 and Cys153 each coordinate (2R,3E)-phycocyanobilin.

Belongs to the phycobiliprotein family. Heterodimer of an alpha and a beta subunit, which further assembles into trimers and the trimers into hexamers. The basic functional unit of phycobiliproteins is a ring-shaped hexamer formed from two back-to-back trimers contacting via the alpha chain subunits. The trimers are composed of alpha/beta subunit heterodimers arranged around a three-fold axis of symmetry. The phycoerythrins also contain a gamma subunit which is located in the center of the hexamer. In terms of processing, contains two covalently linked bilin chromophores.

The protein resides in the plastid. Its subcellular location is the chloroplast thylakoid membrane. Light-harvesting photosynthetic bile pigment-protein from the phycobiliprotein complex (phycobilisome, PBS). Phycocyanin is the major phycobiliprotein in the PBS rod. The chain is C-phycocyanin beta chain (cpcB) from Porphyra purpurea (Red seaweed).